The chain runs to 360 residues: Phospho-N-acetylmuramoyl-pentapeptide-transferase (360 aa).

Helical transmembrane passes span 27–47 (IVSLLTALAIALWMGPRMIAF), 71–91 (TPTMGGLLILLSITISTLLWV), 94–114 (NNPYVWCVLIVLIGYGIVGFV), 132–152 (WKYFWQSVLALGVAFAMYSFG), 168–188 (VMPQLGVLYILLTYFVIVGTS), 199–219 (GLAIMPTVFVAAGFALVAWAT), 236–256 (AGELVIVCTAIVGAGLGFLWF), 263–283 (VFMGDVGSLALGGALGTIAVL), 288–308 (FLLVIMGGVFVVETLSVILQV), and 338–358 (VIVRFWIISLMLVLIGLATLK).

The protein belongs to the glycosyltransferase 4 family. MraY subfamily. The cofactor is Mg(2+).

Its subcellular location is the cell inner membrane. The enzyme catalyses UDP-N-acetyl-alpha-D-muramoyl-L-alanyl-gamma-D-glutamyl-meso-2,6-diaminopimeloyl-D-alanyl-D-alanine + di-trans,octa-cis-undecaprenyl phosphate = di-trans,octa-cis-undecaprenyl diphospho-N-acetyl-alpha-D-muramoyl-L-alanyl-D-glutamyl-meso-2,6-diaminopimeloyl-D-alanyl-D-alanine + UMP. Its pathway is cell wall biogenesis; peptidoglycan biosynthesis. Catalyzes the initial step of the lipid cycle reactions in the biosynthesis of the cell wall peptidoglycan: transfers peptidoglycan precursor phospho-MurNAc-pentapeptide from UDP-MurNAc-pentapeptide onto the lipid carrier undecaprenyl phosphate, yielding undecaprenyl-pyrophosphoryl-MurNAc-pentapeptide, known as lipid I. The protein is Phospho-N-acetylmuramoyl-pentapeptide-transferase of Photorhabdus laumondii subsp. laumondii (strain DSM 15139 / CIP 105565 / TT01) (Photorhabdus luminescens subsp. laumondii).